The primary structure comprises 29 residues: Serum amyloid P-component (29 aa).

Residues 6-29 form the Pentraxin (PTX) domain; the sequence is LGKVFVFSKESNVDDVKLLTPQTE.

It belongs to the pentraxin family. As to quaternary structure, homopentamer. Pentraxin (or pentaxin) have a discoid arrangement of 5 non-covalently bound subunits. Ca(2+) serves as cofactor.

Its subcellular location is the secreted. This Hippoglossus hippoglossus (Atlantic halibut) protein is Serum amyloid P-component.